Reading from the N-terminus, the 189-residue chain is MKLIIGLGNPGKEYSGNRHNVGFQCLSRFAKENHISFDKKCCLSRTGSGRINDEEIVLAKPQTYMNLSGKAVNQLLRRYNLKATDIIVVQDDLDLPAGKLRLRLGGSAGGHNGVSSIITDIGTKEFIRLKIGIGKPDARNNGAEVVDHVLGNFGGEEREIIETAIARAAEALACLITSGLDTASNRFNC.

Y14 contributes to the tRNA binding site. H19 serves as the catalytic Proton acceptor. TRNA is bound by residues Y64, N66, and N112.

Belongs to the PTH family. In terms of assembly, monomer.

It is found in the cytoplasm. The enzyme catalyses an N-acyl-L-alpha-aminoacyl-tRNA + H2O = an N-acyl-L-amino acid + a tRNA + H(+). Its function is as follows. Hydrolyzes ribosome-free peptidyl-tRNAs (with 1 or more amino acids incorporated), which drop off the ribosome during protein synthesis, or as a result of ribosome stalling. In terms of biological role, catalyzes the release of premature peptidyl moieties from peptidyl-tRNA molecules trapped in stalled 50S ribosomal subunits, and thus maintains levels of free tRNAs and 50S ribosomes. The protein is Peptidyl-tRNA hydrolase of Dehalococcoides mccartyi (strain CBDB1).